Consider the following 391-residue polypeptide: Formate-dependent phosphoribosylglycinamide formyltransferase (391 aa).

Residues 18-19 and Glu-78 contribute to the N(1)-(5-phospho-beta-D-ribosyl)glycinamide site; that span reads EL. ATP contacts are provided by residues Arg-110, Lys-151, 156-161, 191-194, and Glu-199; these read SSGKGQ and EEFI. The region spanning 115–305 is the ATP-grasp domain; it reads ELAAQQLGVR…EFELHLRAIL (191 aa). Mg(2+)-binding residues include Glu-264 and Glu-276. N(1)-(5-phospho-beta-D-ribosyl)glycinamide-binding positions include Asp-283, Lys-353, and 360–361; that span reads RR.

This sequence belongs to the PurK/PurT family. In terms of assembly, homodimer.

It catalyses the reaction N(1)-(5-phospho-beta-D-ribosyl)glycinamide + formate + ATP = N(2)-formyl-N(1)-(5-phospho-beta-D-ribosyl)glycinamide + ADP + phosphate + H(+). It functions in the pathway purine metabolism; IMP biosynthesis via de novo pathway; N(2)-formyl-N(1)-(5-phospho-D-ribosyl)glycinamide from N(1)-(5-phospho-D-ribosyl)glycinamide (formate route): step 1/1. Functionally, involved in the de novo purine biosynthesis. Catalyzes the transfer of formate to 5-phospho-ribosyl-glycinamide (GAR), producing 5-phospho-ribosyl-N-formylglycinamide (FGAR). Formate is provided by PurU via hydrolysis of 10-formyl-tetrahydrofolate. In Synechocystis sp. (strain ATCC 27184 / PCC 6803 / Kazusa), this protein is Formate-dependent phosphoribosylglycinamide formyltransferase.